Reading from the N-terminus, the 69-residue chain is MTESRQTRLQVKCPTCQTAVVWKPENAFRPFCSQRCKLIDLGGWADGKYTVSGQTESLPEISEPDMAYR.

4 residues coordinate Zn(2+): Cys13, Cys16, Cys32, and Cys36.

The protein belongs to the DNA gyrase inhibitor YacG family. As to quaternary structure, interacts with GyrB. It depends on Zn(2+) as a cofactor.

In terms of biological role, inhibits all the catalytic activities of DNA gyrase by preventing its interaction with DNA. Acts by binding directly to the C-terminal domain of GyrB, which probably disrupts DNA binding by the gyrase. The protein is DNA gyrase inhibitor YacG of Neisseria meningitidis serogroup B (strain ATCC BAA-335 / MC58).